The following is a 164-amino-acid chain: Cytochrome c-type biogenesis protein CcmE (164 aa).

The Cytoplasmic segment spans residues 1 to 8 (MNPRRKKR). The chain crosses the membrane as a helical; Signal-anchor for type II membrane protein span at residues 9-29 (LTLAVALIGGVAAIASLLLYA). Residues 30-164 (LNSNLNLFFT…EDQSKAGGYK (135 aa)) are Periplasmic-facing. Heme-binding residues include His-131 and Tyr-135. A disordered region spans residues 140–164 (VAEAMGQSHEKLDYSEDQSKAGGYK). Residues 147 to 158 (SHEKLDYSEDQS) show a composition bias toward basic and acidic residues.

It belongs to the CcmE/CycJ family.

The protein resides in the cell inner membrane. Its function is as follows. Heme chaperone required for the biogenesis of c-type cytochromes. Transiently binds heme delivered by CcmC and transfers the heme to apo-cytochromes in a process facilitated by CcmF and CcmH. The chain is Cytochrome c-type biogenesis protein CcmE from Shewanella piezotolerans (strain WP3 / JCM 13877).